A 253-amino-acid chain; its full sequence is 5'/3'-nucleotidase SurE (253 aa).

4 residues coordinate a divalent metal cation: Asp-8, Asp-9, Ser-39, and Asn-92.

The protein belongs to the SurE nucleotidase family. A divalent metal cation is required as a cofactor.

The protein resides in the cytoplasm. The catalysed reaction is a ribonucleoside 5'-phosphate + H2O = a ribonucleoside + phosphate. The enzyme catalyses a ribonucleoside 3'-phosphate + H2O = a ribonucleoside + phosphate. It carries out the reaction [phosphate](n) + H2O = [phosphate](n-1) + phosphate + H(+). In terms of biological role, nucleotidase with a broad substrate specificity as it can dephosphorylate various ribo- and deoxyribonucleoside 5'-monophosphates and ribonucleoside 3'-monophosphates with highest affinity to 3'-AMP. Also hydrolyzes polyphosphate (exopolyphosphatase activity) with the preference for short-chain-length substrates (P20-25). Might be involved in the regulation of dNTP and NTP pools, and in the turnover of 3'-mononucleotides produced by numerous intracellular RNases (T1, T2, and F) during the degradation of various RNAs. This chain is 5'/3'-nucleotidase SurE, found in Enterobacter sp. (strain 638).